Reading from the N-terminus, the 271-residue chain is Putative cysteine protease YopT-like blr2140 (271 aa).

The interval Met1 to Thr81 is disordered. Over residues Gly7–Glu29 the composition is skewed to polar residues. Residues Thr65–Thr81 show a composition bias toward low complexity. The active site involves Cys100. The disordered stretch occupies residues Ser114–Gln136. Active-site residues include His213 and Asp228.

This sequence belongs to the peptidase C58 family.

Its function is as follows. Potential cysteine protease, which may play a central role after invasion of host cell. The sequence is that of Putative cysteine protease YopT-like blr2140 from Bradyrhizobium diazoefficiens (strain JCM 10833 / BCRC 13528 / IAM 13628 / NBRC 14792 / USDA 110).